We begin with the raw amino-acid sequence, 367 residues long: MSVNRILVINPGSTSTKIGVFDNERPVLEETIRHDVEQIGKYKRIIDQYEFRKETILEVLHSHGINISKLNAVCGRGGLLRPIEGGTYTVNDAMLEDLKNGFSGHHASNLGGILAYEIASGLNIPAFIVDPVVVDEMEPVARISGIAGMERKSIFHALNQKAVARKVAEQLNHKYEDLNLLVTHMGGGITVGAHKKGRVIDVNNGLNGEGPFSPERAGTVPVGQLVEMCFSGEYYRDEMIKKLVGQGGLVSLIGTNDAIKVEQMVEKGDPEATLIYKAMAYQVAKEIGGASAVLHGKIDAIVLTGGLAYSKILVDEIKERVDWIADVIVHPGEDELEALAEGALRVLREEEAPKEYVVREKETVARG.

It belongs to the acetokinase family.

The protein resides in the cytoplasm. It catalyses the reaction butanoate + ATP = butanoyl phosphate + ADP. The polypeptide is Probable butyrate kinase (Bacillus cereus (strain ATCC 14579 / DSM 31 / CCUG 7414 / JCM 2152 / NBRC 15305 / NCIMB 9373 / NCTC 2599 / NRRL B-3711)).